The primary structure comprises 519 residues: Probable FAD synthase (519 aa).

The tract at residues 17–108 (AILVIGDEIL…TDQMQFSDEI (92 aa)) is molybdenum cofactor biosynthesis protein-like. Residues 328-485 (QIALSFNGGK…SLGGRDNTVK (158 aa)) are FAD synthase.

It in the N-terminal section; belongs to the MoaB/Mog family. The protein in the C-terminal section; belongs to the PAPS reductase family. FAD1 subfamily. Requires Mg(2+) as cofactor.

The enzyme catalyses FMN + ATP + H(+) = FAD + diphosphate. It functions in the pathway cofactor biosynthesis; FAD biosynthesis; FAD from FMN: step 1/1. In terms of biological role, catalyzes the adenylation of flavin mononucleotide (FMN) to form flavin adenine dinucleotide (FAD) coenzyme. The polypeptide is Probable FAD synthase (Caenorhabditis elegans).